A 518-amino-acid polypeptide reads, in one-letter code: Membrane-bound lytic murein transglycosylase F (518 aa).

The signal sequence occupies residues 1 to 21 (MKKLKINYLFIGILALLLAVA). Positions 22 to 269 (LWPSIPWFGK…RIEEKYLGHG (248 aa)) are non-LT domain. The segment at 270–518 (DDFDYVDTRT…SRKGSEEKQN (249 aa)) is LT domain. E314 is an active-site residue.

In the N-terminal section; belongs to the bacterial solute-binding protein 3 family. The protein in the C-terminal section; belongs to the transglycosylase Slt family.

The protein localises to the cell outer membrane. The enzyme catalyses Exolytic cleavage of the (1-&gt;4)-beta-glycosidic linkage between N-acetylmuramic acid (MurNAc) and N-acetylglucosamine (GlcNAc) residues in peptidoglycan, from either the reducing or the non-reducing ends of the peptidoglycan chains, with concomitant formation of a 1,6-anhydrobond in the MurNAc residue.. In terms of biological role, murein-degrading enzyme that degrades murein glycan strands and insoluble, high-molecular weight murein sacculi, with the concomitant formation of a 1,6-anhydromuramoyl product. Lytic transglycosylases (LTs) play an integral role in the metabolism of the peptidoglycan (PG) sacculus. Their lytic action creates space within the PG sacculus to allow for its expansion as well as for the insertion of various structures such as secretion systems and flagella. The protein is Membrane-bound lytic murein transglycosylase F of Escherichia coli O157:H7.